The primary structure comprises 475 residues: NADH-quinone oxidoreductase subunit N (475 aa).

Helical transmembrane passes span 7–27 (ISIAAPEALLIGVALIGVLLG), 40–60 (LLGALALAGAAFLAASQSAVD), 74–94 (FIAIAKAVSYGVGAIALLVAG), 105–125 (FEYTLLVMFGSAGMGVMLSAN), 127–147 (LMTLYMGIETLSLSSYVLAAF), 161–181 (YFVLGALASGLLLFGCSLVYG), 191–211 (IAAADQSIGLTFGLVLILMAL), 242–262 (APKLATVAVLANIMFTVFGVY), 266–286 (WMLIIAIVSAISMLVGAFGGL), 295–315 (LAYSSIANVGYALMGVAAGEV), 321–341 (VLTYMTIYVITTLGMFGIVLA), 365–385 (LAVAMTVLVFSVAGIPPMAGF), 399–419 (ELYWLVAVGVIGSVVSLGYYL), and 448–468 (GATILAFPVLVIWIGWMTGII).

This sequence belongs to the complex I subunit 2 family. In terms of assembly, NDH-1 is composed of 14 different subunits. Subunits NuoA, H, J, K, L, M, N constitute the membrane sector of the complex.

It is found in the cell inner membrane. It carries out the reaction a quinone + NADH + 5 H(+)(in) = a quinol + NAD(+) + 4 H(+)(out). Functionally, NDH-1 shuttles electrons from NADH, via FMN and iron-sulfur (Fe-S) centers, to quinones in the respiratory chain. The immediate electron acceptor for the enzyme in this species is believed to be ubiquinone. Couples the redox reaction to proton translocation (for every two electrons transferred, four hydrogen ions are translocated across the cytoplasmic membrane), and thus conserves the redox energy in a proton gradient. The protein is NADH-quinone oxidoreductase subunit N of Hirschia baltica (strain ATCC 49814 / DSM 5838 / IFAM 1418).